The chain runs to 134 residues: Mini-ribonuclease 3 (134 aa).

Asp-23 is an active-site residue.

Belongs to the MrnC RNase family. Homodimer. Mg(2+) serves as cofactor.

It is found in the cytoplasm. Functionally, involved in correct processing of both the 5' and 3' ends of 23S rRNA precursor. Processes 30S rRNA precursor transcript even in absence of ribonuclease 3 (Rnc); Rnc processes 30S rRNA into smaller rRNA precursors. In Brevibacillus brevis (strain 47 / JCM 6285 / NBRC 100599), this protein is Mini-ribonuclease 3.